The following is a 1101-amino-acid chain: Rho GTPase-activating protein 30 (1101 aa).

The 196-residue stretch at 20 to 215 (CDLREHLQHS…FILTHVDQLF (196 aa)) folds into the Rho-GAP domain. Disordered regions lie at residues 305–397 (RKLP…VRAL) and 450–499 (LQPR…LEDS). Basic and acidic residues predominate over residues 309–319 (LRVEDREEKSS). Residues 348–367 (SSSSQPSSLMPESLESNSME) show a composition bias toward low complexity. Positions 451–465 (QPRPSPALGPGPPGS) are enriched in pro residues. At Ser578 the chain carries Phosphoserine. Residues 622–848 (LGPKPINWEG…EQKSIDVETE (227 aa)) are disordered. Composition is skewed to basic and acidic residues over residues 659–677 (TRQE…REEA), 686–762 (EAGK…KGDD), 786–821 (EVVH…HSED), and 829–844 (DDRK…KSID). Position 875 is a phosphoserine (Ser875). Disordered regions lie at residues 878–901 (EINE…GMEA) and 968–987 (CPRP…GSRA). The residue at position 996 (Ser996) is a Phosphoserine. The interval 1044-1076 (SRPLSCLERPPEGTEGSEPRSRLSLPPRELHPV) is disordered. The segment covering 1052–1064 (RPPEGTEGSEPRS) has biased composition (basic and acidic residues).

As to quaternary structure, interacts with RHOU in a GTP-independent manner.

The protein resides in the cytoplasmic vesicle. GTPase-activating protein (GAP) for RAC1 and RHOA, but not for CDC42. The sequence is that of Rho GTPase-activating protein 30 (Arhgap30) from Mus musculus (Mouse).